The sequence spans 589 residues: Complement component C8 beta chain (589 aa).

An N-terminal signal peptide occupies residues 1–31 (MKIGAQVWRALAKSCLLCATLGCLHFPGSRG). Positions 32 to 53 (GKPDFFETKAVNGSLVKSRPVR) are excised as a propeptide. Asn-43 carries an N-linked (GlcNAc...) asparagine glycan. One can recognise a TSP type-1 1 domain in the interval 63–116 (DCELSTWSSWTACDPCQKKRYRHTYLLRPSQFYGELCDLSDKEVEDCVTNQPCR). Disulfide bonds link Cys-64/Cys-99, Cys-75/Cys-109, Cys-78/Cys-115, Cys-121/Cys-132, Cys-126/Cys-145, Cys-139/Cys-154, and Cys-161/Cys-199. Trp-69 and Trp-72 each carry a C-linked (Man) tryptophan glycan. An LDL-receptor class A domain is found at 120–155 (RCEGFVCAQTGRCVNRRLLCNGDNDCGDQSDEANCR). The Ca(2+) site is built by Leu-137, Asn-140, Asp-142, Asp-144, Asp-150, and Glu-151. The MACPF domain occupies 157–503 (IYKNCQREME…EFQSEVSSCR (347 aa)). The next 8 beta stranded transmembrane spans lie at 201-206 (PHYILD), 209-213 (FRKPY), 251-258 (FNFTSGFK), 261-268 (GVMDLGIK), 328-335 (SYGEYRDL), 338-343 (DFGTHF), 378-385 (AGGSFGIG), and 391-398 (VYVKVGVS). An intrachain disulfide couples Cys-377 to Cys-402. Residues 404–534 (DIMKEINERN…PGGFQGTACE (131 aa)) form the EGF-like domain. At Thr-417 the chain carries Phosphothreonine. Intrachain disulfides connect Cys-502–Cys-549, Cys-504–Cys-520, Cys-507–Cys-522, and Cys-524–Cys-533. Residues 544–587 (DGKWSCWSDWSACSGGHKTRHRQCNNPAPHKGGSPCSGPASETL) form the TSP type-1 2 domain. 2 C-linked (Man) tryptophan glycosylation sites follow: Trp-550 and Trp-553. An intrachain disulfide couples Cys-556 to Cys-589. The segment at 570-589 (PAPHKGGSPCSGPASETLNC) is disordered.

It belongs to the complement C6/C7/C8/C9 family. Heterotrimer of 3 chains: alpha (C8A), beta (C8B) and gamma (C8G); the alpha and gamma chains are disulfide bonded. Component of the membrane attack complex (MAC), composed of complement C5b, C6, C7, C8A, C8B, C8G and multiple copies of the pore-forming subunit C9. In terms of processing, N-glycosylated; contains one or two bound glycans. Not O-glycosylated.

The protein localises to the secreted. The protein resides in the target cell membrane. Its activity is regulated as follows. Membrane attack complex (MAC) assembly is inhibited by CD59, thereby protecting self-cells from damage during complement activation. CD59 acts by binding to the beta-haipins of C8 (C8A and C8B), forming an intermolecular beta-sheet that prevents incorporation of the multiple copies of C9 required for complete formation of the osmolytic pore. MAC assembly is also inhibited by clusterin (CLU) chaperones that inhibit polymerization of C9. Component of the membrane attack complex (MAC), a multiprotein complex activated by the complement cascade, which inserts into a target cell membrane and forms a pore, leading to target cell membrane rupture and cell lysis. The MAC is initiated by proteolytic cleavage of C5 into complement C5b in response to the classical, alternative, lectin and GZMK complement pathways. The complement pathways consist in a cascade of proteins that leads to phagocytosis and breakdown of pathogens and signaling that strengthens the adaptive immune system. C8B, together with C8A and C8G, inserts into the target membrane, but does not form pores by itself. During MAC assembly, associates with C5b, C6 and C7 to form the C5b8 intermediate complex that inserts into the target membrane and traverses the bilayer increasing membrane rigidity. In Mus musculus (Mouse), this protein is Complement component C8 beta chain (C8b).